The chain runs to 115 residues: Putative UPF0320 protein YKL225W (115 aa).

Belongs to the UPF0320 family.

This is Putative UPF0320 protein YKL225W from Saccharomyces cerevisiae (strain ATCC 204508 / S288c) (Baker's yeast).